Consider the following 246-residue polypeptide: Probable 2-phosphosulfolactate phosphatase (246 aa).

This sequence belongs to the ComB family. Mg(2+) serves as cofactor.

It carries out the reaction (2R)-O-phospho-3-sulfolactate + H2O = (2R)-3-sulfolactate + phosphate. The chain is Probable 2-phosphosulfolactate phosphatase from Synechococcus sp. (strain WH7803).